We begin with the raw amino-acid sequence, 214 residues long: MDPKISEIRKSYTLSSLEIEDAGSDPVLFFQKWFEEAVQSEVLEVNAMTLATVTQDGKPDARIVLLKGILKESFLFYTNYESRKGTELETNPNVCLVFFWPELERQVRIEGNVTKVSREVSKEYFHSRPRESQIGALASPQSQKIPDRKFLEGRFQKFTNQYQNKEVDLPNHWGGYAVYPCRIEFWQGRSSRLHDRIVFERDTSSSWEKFRIAP.

Substrate is bound by residues 9–12 and Lys-67; that span reads RKSY. Residues 62 to 67, 77 to 78, Arg-83, Lys-84, and Gln-106 contribute to the FMN site; these read RIVLLK and YT. Residues Tyr-124, Arg-128, and Ser-132 each coordinate substrate. Residues 141-142 and Trp-186 each bind FMN; that span reads QS. Substrate is bound at residue 192–194; the sequence is RLH. Arg-196 contacts FMN.

Belongs to the pyridoxamine 5'-phosphate oxidase family. Homodimer. It depends on FMN as a cofactor.

It carries out the reaction pyridoxamine 5'-phosphate + O2 + H2O = pyridoxal 5'-phosphate + H2O2 + NH4(+). The enzyme catalyses pyridoxine 5'-phosphate + O2 = pyridoxal 5'-phosphate + H2O2. It functions in the pathway cofactor metabolism; pyridoxal 5'-phosphate salvage; pyridoxal 5'-phosphate from pyridoxamine 5'-phosphate: step 1/1. It participates in cofactor metabolism; pyridoxal 5'-phosphate salvage; pyridoxal 5'-phosphate from pyridoxine 5'-phosphate: step 1/1. Its function is as follows. Catalyzes the oxidation of either pyridoxine 5'-phosphate (PNP) or pyridoxamine 5'-phosphate (PMP) into pyridoxal 5'-phosphate (PLP). This is Pyridoxine/pyridoxamine 5'-phosphate oxidase from Leptospira interrogans serogroup Icterohaemorrhagiae serovar copenhageni (strain Fiocruz L1-130).